The primary structure comprises 581 residues: Threonine--tRNA ligase (581 aa).

The interval 185–478 is catalytic; it reads DHRKLGKELD…LVEHYGGAFP (294 aa). Zn(2+) is bound by residues Cys-278, His-329, and His-455.

The protein belongs to the class-II aminoacyl-tRNA synthetase family. In terms of assembly, homodimer. The cofactor is Zn(2+).

Its subcellular location is the cytoplasm. The catalysed reaction is tRNA(Thr) + L-threonine + ATP = L-threonyl-tRNA(Thr) + AMP + diphosphate + H(+). Its function is as follows. Catalyzes the attachment of threonine to tRNA(Thr) in a two-step reaction: L-threonine is first activated by ATP to form Thr-AMP and then transferred to the acceptor end of tRNA(Thr). Also edits incorrectly charged L-seryl-tRNA(Thr). This Borreliella burgdorferi (strain ATCC 35210 / DSM 4680 / CIP 102532 / B31) (Borrelia burgdorferi) protein is Threonine--tRNA ligase.